The sequence spans 222 residues: Ras-related protein Rab11D (222 aa).

22-29 serves as a coordination point for GTP; the sequence is GDSAVGKS. The short motif at 44–52 is the Effector region element; that stretch reads SKATIGVEF. GTP is bound by residues 70–74 and 128–131; these read DTAGQ and NKTD. S-geranylgeranyl cysteine attachment occurs at residues Cys-219 and Cys-220.

This sequence belongs to the small GTPase superfamily. Rab family.

Its subcellular location is the cell membrane. The chain is Ras-related protein Rab11D (RAB11D) from Nicotiana tabacum (Common tobacco).